Here is a 147-residue protein sequence, read N- to C-terminus: Large ribosomal subunit protein uL15 (147 aa).

It belongs to the universal ribosomal protein uL15 family. As to quaternary structure, part of the 50S ribosomal subunit.

In terms of biological role, binds to the 23S rRNA. This Blochmanniella floridana protein is Large ribosomal subunit protein uL15.